We begin with the raw amino-acid sequence, 302 residues long: MAKPLSISSSDTQSQPLQWRAYYEMTKPKVVALMLLTVLVGMCLALPGAVPLQPLIFGLLGIGMMAGAAAAFNHLIDRRIDGLMARTYNRPLPKGRVSITKALTFSISLAVLGFVLLYTLVNELTAWLTFASLLGYAVVYTAYLKRATPQNIVVGGLAGAMPPLLGWTSVTGEFHGNALLLVIIIFAWTPPHFWALAIHRKAEYAKVDIPMLPVTHGTEFTKTCILLYTILLAIACLLPVLVGMCGPLYLVGSTLLSCGFIYKSWELKFDDKPGLAMQVFRFSIYHLMLLFIVLLVDHYLWV.

The next 9 membrane-spanning stretches (helical) occupy residues 30–50 (VVAL…PGAV), 52–72 (LQPL…AAAF), 102–122 (ALTF…TLVN), 124–144 (LTAW…TAYL), 152–172 (IVVG…SVTG), 178–198 (ALLL…ALAI), 224–244 (CILL…LVGM), 245–265 (CGPL…YKSW), and 282–302 (FSIY…YLWV).

The protein belongs to the UbiA prenyltransferase family. Protoheme IX farnesyltransferase subfamily.

Its subcellular location is the cell inner membrane. The enzyme catalyses heme b + (2E,6E)-farnesyl diphosphate + H2O = Fe(II)-heme o + diphosphate. The protein operates within porphyrin-containing compound metabolism; heme O biosynthesis; heme O from protoheme: step 1/1. Functionally, converts heme B (protoheme IX) to heme O by substitution of the vinyl group on carbon 2 of heme B porphyrin ring with a hydroxyethyl farnesyl side group. The polypeptide is Protoheme IX farnesyltransferase 1 (Shewanella woodyi (strain ATCC 51908 / MS32)).